Reading from the N-terminus, the 391-residue chain is S-adenosylmethionine synthase (391 aa).

His-14 lines the ATP pocket. Mg(2+) is bound at residue Asp-16. A K(+)-binding site is contributed by Glu-42. Residues Glu-55 and Gln-98 each coordinate L-methionine. The flexible loop stretch occupies residues Gln-98–Glu-108. Residues Asp-172 to Lys-174, Arg-238 to Phe-239, Asp-247, Arg-253 to Lys-254, Ala-270, and Lys-274 contribute to the ATP site. Asp-247 serves as a coordination point for L-methionine. Residue Lys-278 coordinates L-methionine.

The protein belongs to the AdoMet synthase family. Homotetramer; dimer of dimers. It depends on Mg(2+) as a cofactor. K(+) serves as cofactor.

Its subcellular location is the cytoplasm. The catalysed reaction is L-methionine + ATP + H2O = S-adenosyl-L-methionine + phosphate + diphosphate. It participates in amino-acid biosynthesis; S-adenosyl-L-methionine biosynthesis; S-adenosyl-L-methionine from L-methionine: step 1/1. In terms of biological role, catalyzes the formation of S-adenosylmethionine (AdoMet) from methionine and ATP. The overall synthetic reaction is composed of two sequential steps, AdoMet formation and the subsequent tripolyphosphate hydrolysis which occurs prior to release of AdoMet from the enzyme. In Clostridium tetani (strain Massachusetts / E88), this protein is S-adenosylmethionine synthase.